A 249-amino-acid chain; its full sequence is Enolase-phosphatase E1 (249 aa).

The protein belongs to the HAD-like hydrolase superfamily. MasA/MtnC family. Monomer. The cofactor is Mg(2+).

It carries out the reaction 5-methylsulfanyl-2,3-dioxopentyl phosphate + H2O = 1,2-dihydroxy-5-(methylsulfanyl)pent-1-en-3-one + phosphate. It participates in amino-acid biosynthesis; L-methionine biosynthesis via salvage pathway; L-methionine from S-methyl-5-thio-alpha-D-ribose 1-phosphate: step 3/6. The protein operates within amino-acid biosynthesis; L-methionine biosynthesis via salvage pathway; L-methionine from S-methyl-5-thio-alpha-D-ribose 1-phosphate: step 4/6. Functionally, bifunctional enzyme that catalyzes the enolization of 2,3-diketo-5-methylthiopentyl-1-phosphate (DK-MTP-1-P) into the intermediate 2-hydroxy-3-keto-5-methylthiopentenyl-1-phosphate (HK-MTPenyl-1-P), which is then dephosphorylated to form the acireductone 1,2-dihydroxy-3-keto-5-methylthiopentene (DHK-MTPene). The protein is Enolase-phosphatase E1 of Synechococcus sp. (strain RCC307).